The chain runs to 400 residues: Deoxyguanosinetriphosphate triphosphohydrolase-like protein (400 aa).

The 143-residue stretch at 73 to 215 (RLTHSIEVSQ…AAIADDIAYN (143 aa)) folds into the HD domain.

This sequence belongs to the dGTPase family. Type 2 subfamily.

The polypeptide is Deoxyguanosinetriphosphate triphosphohydrolase-like protein (Bartonella tribocorum (strain CIP 105476 / IBS 506)).